The following is a 212-amino-acid chain: Putative 3-methyladenine DNA glycosylase (212 aa).

Belongs to the DNA glycosylase MPG family.

The protein is Putative 3-methyladenine DNA glycosylase of Psychrobacter cryohalolentis (strain ATCC BAA-1226 / DSM 17306 / VKM B-2378 / K5).